Consider the following 206-residue polypeptide: Protein FAM228A (206 aa).

It belongs to the FAM228 family.

The chain is Protein FAM228A (FAM228A) from Homo sapiens (Human).